The primary structure comprises 236 residues: ATP synthase subunit a (236 aa).

A run of 5 helical transmembrane segments spans residues 17–37, 76–96, 113–133, 170–190, and 196–216; these read WTNLISGTIVFVITFFLLFGL, SFFVFVLFVFLFISNQLGLII, PVVTMTLALCAVTLSHFAGVA, IFGNIYAGELLLKLLAGMAFS, and MIVSLPLEIIWQGFSVFIGAI.

Belongs to the ATPase A chain family. In terms of assembly, F-type ATPases have 2 components, CF(1) - the catalytic core - and CF(0) - the membrane proton channel. CF(1) has five subunits: alpha(3), beta(3), gamma(1), delta(1), epsilon(1). CF(0) has three main subunits: a(1), b(2) and c(9-12). The alpha and beta chains form an alternating ring which encloses part of the gamma chain. CF(1) is attached to CF(0) by a central stalk formed by the gamma and epsilon chains, while a peripheral stalk is formed by the delta and b chains.

Its subcellular location is the cell membrane. Key component of the proton channel; it plays a direct role in the translocation of protons across the membrane. The protein is ATP synthase subunit a of Limosilactobacillus fermentum (strain NBRC 3956 / LMG 18251) (Lactobacillus fermentum).